The sequence spans 269 residues: Neurotrophic factor BDNF precursor form (269 aa).

The N-terminal stretch at 1 to 18 (MTILFLTMVISYFSCMRA) is a signal peptide. The propeptide occupies 19 to 150 (APLRDAPGMR…AANMSMRVRR (132 aa)). Disordered regions lie at residues 39-61 (AATAPRGHGTPQSGGGPGQREEL) and 82-104 (AAHVGQGADKSQGGGGPSPVATA). Asn-143 carries an N-linked (GlcNAc...) asparagine glycan. Disulfide bonds link Cys-163–Cys-230, Cys-208–Cys-259, and Cys-218–Cys-261.

The protein belongs to the NGF-beta family.

Functionally, BDNF promotes the survival of neuronal populations that are all located either in the central nervous system or directly connected to it. This is Neurotrophic factor BDNF precursor form (bdnf) from Xiphophorus maculatus (Southern platyfish).